Here is an 86-residue protein sequence, read N- to C-terminus: U-myrmeciitoxin(01)-Mg1a (86 aa).

An N-terminal signal peptide occupies residues 1-26 (MKLLYLLLTLAIIFVLTIVHAPNVEA). Positions 27–52 (KALADPESDAVGFADAFGDADAEATG) are excised as a propeptide. Leucine 85 is modified (leucine amide).

The protein belongs to the formicidae venom precursor-01 superfamily. As to expression, expressed by the venom gland. This toxin is detected along the entire venom gland, as well as in the venom reservoir, the venom duct and in the venom. No toxin are detected in the Dufour's gland.

The protein resides in the secreted. It is found in the target cell membrane. Its function is as follows. Toxin that may interact with target cell membranes, producing a concentration-dependent leak in ion conductance, possibly via multimeric pore formation. It produces an immediate sharp increase of calcium concentration in all DRG neurons. This influx in calcium stabilizes without resulting in any observable dye leakage, showing that the effect is not simply cytolytic. This toxin may be one of the major contributors to the pain associated with envenomation. The toxin also displays a weak cytotoxicity (on HEK cells) and some antimicrobial activity (MIC=2.5 uM on C.neoformans (var. grubii), MIC=10.2 uM on S.aureus), but is not hemolytic to human erythtrocytes. In vivo, intraplantar injection into mice causes spontaneous nocifensive behavior (licking, flinching, or shaking of the paw), which lasts 5-7 minutes (10 and 100 uM tested). Mechanical and heat hypoalgesia are observed at 20 and 25 minutes after injection (highest dose tested of 100 uM). In vivo, injection into crickets (A.domesticus) causes an immediate, dose-dependent, reversible and nonlethal incapacitation that lasts about 53 minutes at the highest dose tested (60 ug/g). This is U-myrmeciitoxin(01)-Mg1a from Myrmecia gulosa (Red bulldog ant).